The primary structure comprises 265 residues: MSKTTIIERIWPAKEIIEDLSELRKQSPLTHVITNIVVTNWTANVLLAIGSSPAMVIAKEEAGEFAKIASGLLINIGTVTSNDAITMKIAAEAAHQAKIPWVLDPVAVGALGFRTELAKELLNFKPTVIRGNASEILALAGTDGGGKGVDSTALSSDALPLAQMLAEKTGAVIAISGEIDYVTNGKETISISGGDPIMTKVTGVGCSLGGVIASFLGVQKDPLRATASASAVFAIAGTRSAKISKGSGSFAVNFLDQLNLLSTEK.

M55 serves as a coordination point for substrate. ATP-binding residues include R130 and S176. G203 contributes to the substrate binding site.

The protein belongs to the Thz kinase family. It depends on Mg(2+) as a cofactor.

It carries out the reaction 5-(2-hydroxyethyl)-4-methylthiazole + ATP = 4-methyl-5-(2-phosphooxyethyl)-thiazole + ADP + H(+). The protein operates within cofactor biosynthesis; thiamine diphosphate biosynthesis; 4-methyl-5-(2-phosphoethyl)-thiazole from 5-(2-hydroxyethyl)-4-methylthiazole: step 1/1. In terms of biological role, catalyzes the phosphorylation of the hydroxyl group of 4-methyl-5-beta-hydroxyethylthiazole (THZ). This chain is Hydroxyethylthiazole kinase, found in Leptospira interrogans serogroup Icterohaemorrhagiae serovar Lai (strain 56601).